A 788-amino-acid polypeptide reads, in one-letter code: Protein translocase subunit SecA 2 (788 aa).

ATP is bound by residues Q77, 95–99 (GEGKT), and D491.

It belongs to the SecA family. As to quaternary structure, monomer and homodimer. Part of the essential Sec protein translocation apparatus which comprises SecA, SecYEG and auxiliary proteins SecDF. Other proteins may also be involved.

It localises to the cell membrane. The protein resides in the cytoplasm. It carries out the reaction ATP + H2O + cellular proteinSide 1 = ADP + phosphate + cellular proteinSide 2.. Its function is as follows. Part of the Sec protein translocase complex. Interacts with the SecYEG preprotein conducting channel. Has a central role in coupling the hydrolysis of ATP to the transfer of proteins into and across the cell membrane, serving as an ATP-driven molecular motor driving the stepwise translocation of polypeptide chains across the membrane. This chain is Protein translocase subunit SecA 2, found in Lactobacillus johnsonii (strain CNCM I-12250 / La1 / NCC 533).